The primary structure comprises 459 residues: Endoglucanase EG-1 (459 aa).

The signal sequence occupies residues 1-22 (MAPSVTLPLTTAILAIARLVAA). Gln-23 bears the Pyrrolidone carboxylic acid mark. The catalytic stretch occupies residues 23 to 397 (QQPGTSTPEV…DIGSTTNSTA (375 aa)). Cystine bridges form between Cys-41–Cys-47, Cys-71–Cys-92, Cys-82–Cys-88, Cys-161–Cys-360, Cys-193–Cys-216, Cys-197–Cys-215, Cys-236–Cys-241, and Cys-246–Cys-315. Asn-78 carries N-linked (GlcNAc) asparagine glycosylation. N-linked (GlcNAc...) (high mannose) asparagine glycosylation occurs at Asn-204. Catalysis depends on Glu-218, which acts as the Nucleophile. Glu-223 acts as the Proton donor/acceptor in catalysis. Positions 390-425 (GSTTNSTAPPPPPASSTTFSTTRRSSTTSSSPSCTQ) are disordered. Asn-394 carries an N-linked (GlcNAc...) asparagine glycan. Positions 398-423 (PPPPPASSTTFSTTRRSSTTSSSPSC) are linker. Residues 404 to 425 (SSTTFSTTRRSSTTSSSPSCTQ) are compositionally biased toward low complexity. Intrachain disulfides connect Cys-423–Cys-439, Cys-431–Cys-448, and Cys-442–Cys-458. The 37-residue stretch at 423–459 (CTQTHWGQCGGIGYSGCKTCTSGTTCQYSNDYYSQCL) folds into the CBM1 domain.

This sequence belongs to the glycosyl hydrolase 7 (cellulase C) family. Post-translationally, asn-204 contains mainly a high-mannose-type glycan (Hex(7-9)GlcNAc(2)), with a small fraction (8%) bearing a single GlcNAc at this site.

It is found in the secreted. It carries out the reaction Endohydrolysis of (1-&gt;4)-beta-D-glucosidic linkages in cellulose, lichenin and cereal beta-D-glucans.. In terms of biological role, endoglucanase (EG) that cleaves the internal beta-1,4-glucosidic bonds in cellulose. The degradation of cellulose involves an interplay between different cellulolytic enzymes. Hydrolysis starts with EGs, which cut internal glycosidic linkages to reduce the polymerization degree of the substrate and creates new chain ends for exocellobiohydrolases (CBHs). The CBH release the disaccharide cellobiose from the non-reducing end of the cellulose polymer chain. Finally, beta-1,4-glucosidases hydrolyze the cellobiose and other short cello-oligosaccharides into glucose units. The chain is Endoglucanase EG-1 (egl1) from Hypocrea jecorina (Trichoderma reesei).